We begin with the raw amino-acid sequence, 543 residues long: Putative fatty acyl-CoA reductase CG8303 (543 aa).

Residues 1–29 are disordered; sequence MAVITEHGGTTSSPPENNNSIGNGKHRVN. Residues 8–22 show a composition bias toward polar residues; sequence GGTTSSPPENNNSIG. 3 helical membrane passes run 386 to 406, 500 to 520, and 522 to 542; these read LFFY…EKLF, VFNV…YFAL, and LTLG…FLVW.

Belongs to the fatty acyl-CoA reductase family.

It localises to the membrane. The catalysed reaction is a long-chain fatty acyl-CoA + 2 NADPH + 2 H(+) = a long-chain primary fatty alcohol + 2 NADP(+) + CoA. It carries out the reaction hexadecanoyl-CoA + 2 NADPH + 2 H(+) = hexadecan-1-ol + 2 NADP(+) + CoA. It catalyses the reaction octadecanoyl-CoA + 2 NADPH + 2 H(+) = octadecan-1-ol + 2 NADP(+) + CoA. Its function is as follows. Catalyzes the reduction of C16 or C18 fatty acyl-CoA to fatty alcohols. The chain is Putative fatty acyl-CoA reductase CG8303 from Drosophila melanogaster (Fruit fly).